We begin with the raw amino-acid sequence, 594 residues long: Probable translation initiation factor IF-2 (594 aa).

Positions 11-226 (LRTPIVCVMG…LIGLAQRFLE (216 aa)) constitute a tr-type G domain. Residues 20–27 (GHVDHGKT) form a G1 region. Residue 20–27 (GHVDHGKT) participates in GTP binding. The G2 stretch occupies residues 45–49 (AITQH). Residues 81–84 (DTPG) form a G3 region. Residues 81–85 (DTPGH) and 135–138 (NKID) contribute to the GTP site. Residues 135-138 (NKID) form a G4 region. Residues 203 to 205 (SAR) are G5.

This sequence belongs to the TRAFAC class translation factor GTPase superfamily. Classic translation factor GTPase family. IF-2 subfamily.

Functionally, function in general translation initiation by promoting the binding of the formylmethionine-tRNA to ribosomes. Seems to function along with eIF-2. In Methanocella arvoryzae (strain DSM 22066 / NBRC 105507 / MRE50), this protein is Probable translation initiation factor IF-2.